A 200-amino-acid polypeptide reads, in one-letter code: Thymidine kinase (200 aa).

Residues 15-22 (GPMYSGKS) and 88-91 (DEVQ) each bind ATP. The active-site Proton acceptor is E89. Residues C145, C148, C177, and C180 each coordinate Zn(2+).

It belongs to the thymidine kinase family. In terms of assembly, homotetramer.

It is found in the cytoplasm. It catalyses the reaction thymidine + ATP = dTMP + ADP + H(+). The protein is Thymidine kinase of Mycoplasma mobile (strain ATCC 43663 / 163K / NCTC 11711) (Mesomycoplasma mobile).